The primary structure comprises 575 residues: MTSSAWGLLALFLAALLVLAWPVGKFLAALCNERVPRWMQRVEAPLYKIAGTRPEQSMHWLRYAIALLAFNAVGAVFVYALQRLQGWLPLNPAGMGAVSPDSAFNTAVSFVSNTNWQGYAGESAMSYLTQMLGLAVQNFFSAATGIAVAFALIRGFARRGDGKARGLVGNFWADLTRITLWVLVPLSFVLAVFFVSQGVIQNFDAYKTVQTVEATAAGGQTLAMGPVASQEAIKMLGTNGGGFFNANSAHPYENPSALANLLQMIAVFLIPAALCFAFGRVAGDLRQGWAVLAAMTVMFVAAVMVVIPAEQDGNPLFGALGVDQLHGALQSGGNMEGKEVRFGIDASALFAAVTTAASCGAVIAMHDSFTPLGGMVPMVLMQLGEVVFGGVGSGLYGMLIFAMLAVFIAGLMIGRTPEYLGKKIEVREMKLISIAILVTPVLVLAGTAVAVLAGAGKAGIANPGAHGFSEILYALSSAANNNGSAFAGLSANTPFYNGLLGLAMWLGRFAVIVPVLAIAGSLAAKQRLPVTGGTLPTHGPLFVSLLIGTVLLVGLLNYVPALALGPVVEHLVLWK.

The next 12 helical transmembrane spans lie at 4-24 (SAWG…WPVG), 61-81 (LRYA…VYAL), 133-153 (GLAV…FALI), 180-200 (LWVL…QGVI), 258-278 (LANL…CFAF), 289-309 (WAVL…VIPA), 344-364 (IDAS…AVIA), 372-392 (LGGM…GGVG), 394-414 (GLYG…LMIG), 431-451 (LISI…AVAV), 499-519 (LLGL…LAIA), and 545-565 (LLIG…LALG).

It belongs to the KdpA family. As to quaternary structure, the system is composed of three essential subunits: KdpA, KdpB and KdpC.

It is found in the cell inner membrane. In terms of biological role, part of the high-affinity ATP-driven potassium transport (or Kdp) system, which catalyzes the hydrolysis of ATP coupled with the electrogenic transport of potassium into the cytoplasm. This subunit binds the periplasmic potassium ions and delivers the ions to the membrane domain of KdpB through an intramembrane tunnel. The sequence is that of Potassium-transporting ATPase potassium-binding subunit from Variovorax paradoxus (strain S110).